A 98-amino-acid chain; its full sequence is MADWVREAADGSLTLTLHIQPGARQTGFAGLHGEAMKIRLAAPPVDGKANAALCAFLADFCEVPKSAVTLVSGETSRAKRVRVETKTPGLAGRLRALG.

It belongs to the UPF0235 family.

This Azoarcus sp. (strain BH72) protein is UPF0235 protein azo3464.